Here is a 278-residue protein sequence, read N- to C-terminus: Bicarbonate transport system permease protein CmpB (278 aa).

The next 7 helical transmembrane spans lie at 24 to 44 (LDGI…WQIF), 93 to 113 (VAQG…LVGL), 124 to 144 (LFQF…LVAF), 151 to 171 (AIFV…AEGV), 196 to 216 (VVLP…IGLS), 217 to 237 (WLAI…GFFI), and 249 to 269 (IILA…FVAW). Positions 86-267 (TIASLTRVAQ…AVGLLLDRFV (182 aa)) constitute an ABC transmembrane type-1 domain.

This sequence belongs to the binding-protein-dependent transport system permease family. In terms of assembly, the complex is composed of two ATP-binding proteins (CmpC and CmpD), a transmembrane protein (CmpB) and a solute-binding protein (CmpA).

The protein localises to the cell inner membrane. Its function is as follows. Part of the ABC transporter complex CmpABCD involved in bicarbonate transport. Probably responsible for the translocation of the substrate across the membrane. This chain is Bicarbonate transport system permease protein CmpB (cmpB), found in Synechococcus sp. (strain ATCC 27144 / PCC 6301 / SAUG 1402/1) (Anacystis nidulans).